The primary structure comprises 268 residues: Ribosomal RNA small subunit methyltransferase A (268 aa).

6 residues coordinate S-adenosyl-L-methionine: Asn-18, Leu-20, Gly-45, Glu-66, Asp-91, and Asn-112.

Belongs to the class I-like SAM-binding methyltransferase superfamily. rRNA adenine N(6)-methyltransferase family. RsmA subfamily.

Its subcellular location is the cytoplasm. The catalysed reaction is adenosine(1518)/adenosine(1519) in 16S rRNA + 4 S-adenosyl-L-methionine = N(6)-dimethyladenosine(1518)/N(6)-dimethyladenosine(1519) in 16S rRNA + 4 S-adenosyl-L-homocysteine + 4 H(+). Specifically dimethylates two adjacent adenosines (A1518 and A1519) in the loop of a conserved hairpin near the 3'-end of 16S rRNA in the 30S particle. May play a critical role in biogenesis of 30S subunits. In Shewanella putrefaciens (strain CN-32 / ATCC BAA-453), this protein is Ribosomal RNA small subunit methyltransferase A.